A 383-amino-acid chain; its full sequence is WAT1-related protein At3g18200 (383 aa).

Over residues 1–16 the composition is skewed to basic residues; it reads MCYQTSKKKRRSRKRR. The disordered stretch occupies residues 1–23; sequence MCYQTSKKKRRSRKRRAQEEKEK. The next 10 membrane-spanning stretches (helical) occupy residues 33–53, 65–85, 91–111, 126–146, 158–178, 204–224, 237–257, 272–292, 300–320, and 325–345; these read VKLV…HIVS, VYPV…AYFF, PPLT…GITA, TFAS…ACAL, GVAK…ITLY, LTLG…WMVL, TLTS…ALFV, LFTI…LQTW, VFVA…AFLI, and LYSG…LVLW. 2 consecutive EamA domains span residues 44–173 and 216–344; these read FCFA…GGAT and LSWA…YLVL.

It belongs to the drug/metabolite transporter (DMT) superfamily. Plant drug/metabolite exporter (P-DME) (TC 2.A.7.4) family.

Its subcellular location is the membrane. This Arabidopsis thaliana (Mouse-ear cress) protein is WAT1-related protein At3g18200.